The sequence spans 347 residues: Lipoyl synthase (347 aa).

Residues C55, C60, C66, C81, C85, C88, and S292 each contribute to the [4Fe-4S] cluster site. One can recognise a Radical SAM core domain in the interval 67–281; it reads WEDREASFLI…SEAAYDMGFP (215 aa).

This sequence belongs to the radical SAM superfamily. Lipoyl synthase family. It depends on [4Fe-4S] cluster as a cofactor.

It localises to the cytoplasm. The enzyme catalyses [[Fe-S] cluster scaffold protein carrying a second [4Fe-4S](2+) cluster] + N(6)-octanoyl-L-lysyl-[protein] + 2 oxidized [2Fe-2S]-[ferredoxin] + 2 S-adenosyl-L-methionine + 4 H(+) = [[Fe-S] cluster scaffold protein] + N(6)-[(R)-dihydrolipoyl]-L-lysyl-[protein] + 4 Fe(3+) + 2 hydrogen sulfide + 2 5'-deoxyadenosine + 2 L-methionine + 2 reduced [2Fe-2S]-[ferredoxin]. Its pathway is protein modification; protein lipoylation via endogenous pathway; protein N(6)-(lipoyl)lysine from octanoyl-[acyl-carrier-protein]: step 2/2. Functionally, catalyzes the radical-mediated insertion of two sulfur atoms into the C-6 and C-8 positions of the octanoyl moiety bound to the lipoyl domains of lipoate-dependent enzymes, thereby converting the octanoylated domains into lipoylated derivatives. The polypeptide is Lipoyl synthase (Corynebacterium urealyticum (strain ATCC 43042 / DSM 7109)).